The sequence spans 270 residues: Orotidine 5'-phosphate decarboxylase (270 aa).

Substrate contacts are provided by residues Asp39, 61-63, 93-102, Tyr221, and Arg239; these read KTH and DRKFADIGNT. Catalysis depends on Lys95, which acts as the Proton donor.

Belongs to the OMP decarboxylase family.

It carries out the reaction orotidine 5'-phosphate + H(+) = UMP + CO2. It participates in pyrimidine metabolism; UMP biosynthesis via de novo pathway; UMP from orotate: step 2/2. The chain is Orotidine 5'-phosphate decarboxylase (URA3) from Candida dubliniensis (strain CD36 / ATCC MYA-646 / CBS 7987 / NCPF 3949 / NRRL Y-17841) (Yeast).